Consider the following 285-residue polypeptide: MDSRTMTLIQAIVIAILQGATELFPVSSLGHAVIVPALLGWAFDPHGEIFLPFLVMLHLGTAIALLVYFRNDWAAIFQGLRGRDGSQRQAESIHILALLVVATIPAVIIGGLLEHWLRALFGTARYAAIFLFLNGLLLLLTERMKSRQPVQGGYAIASLTYADAAIIGLWQCLAFLPGISRSGATIIGALFRGLNHEGAARFSFLMAQPVIIAATVREALHMRHVAIPPGQMQVATIGAMVAAVTALASTAFLMRYFHNHERWALSPFGYYCVLAGAVSFFILGH.

Helical transmembrane passes span I12–I34, I49–F69, I93–L113, L120–L140, L159–I179, V234–M254, and W263–L283.

It belongs to the UppP family.

It is found in the cell inner membrane. It catalyses the reaction di-trans,octa-cis-undecaprenyl diphosphate + H2O = di-trans,octa-cis-undecaprenyl phosphate + phosphate + H(+). Functionally, catalyzes the dephosphorylation of undecaprenyl diphosphate (UPP). Confers resistance to bacitracin. In Gluconacetobacter diazotrophicus (strain ATCC 49037 / DSM 5601 / CCUG 37298 / CIP 103539 / LMG 7603 / PAl5), this protein is Undecaprenyl-diphosphatase.